Consider the following 162-residue polypeptide: Large ribosomal subunit protein bL17 (162 aa).

The segment at Arg118–Glu162 is disordered. The segment covering Ala126 to Glu162 has biased composition (basic and acidic residues).

This sequence belongs to the bacterial ribosomal protein bL17 family. As to quaternary structure, part of the 50S ribosomal subunit. Contacts protein L32.

The polypeptide is Large ribosomal subunit protein bL17 (Anaeromyxobacter dehalogenans (strain 2CP-C)).